The primary structure comprises 306 residues: MTASLHIILDTDPGIDDAAAIAAALFAPQLDLQLITTVAGNVSVEKTTRNALQLLHFWNSDIPLAQGAATPLLRPLRDAAYVHGESGMEGYDFVDHQRQPLAKPAFIAIRDVLMNAPEPMTLVAIGPLTNIALLLMHYPECACNIRRLVLMGGSAGRGNFTPNAEFNIAVDPEAAALVFRSGLEIVMCGLDVTNQAMLSPDFLNKLPALNRTGKMLHSLFNHYRSGSMRTGVRMHDLCAIAWLVRPELFTLQSCFVAVETQGQYTAGTTVVDIEGRLGQPANAQVALALDVDGFRQWVAEVFACAP.

The active site involves His235.

It belongs to the IUNH family. RihC subfamily.

Its function is as follows. Hydrolyzes both purine and pyrimidine ribonucleosides with a broad-substrate specificity. This Salmonella heidelberg (strain SL476) protein is Non-specific ribonucleoside hydrolase RihC.